The following is a 763-amino-acid chain: Lysine-specific histone demethylase 1 homolog 2 (763 aa).

The region spanning 53–152 (QRETETEALI…FGVSAAFPAS (100 aa)) is the SWIRM domain. Glu192, Arg194, Arg200, and Glu571 together coordinate FAD.

It belongs to the flavin monoamine oxidase family. The cofactor is FAD.

In terms of biological role, probable histone demethylase. This is Lysine-specific histone demethylase 1 homolog 2 from Oryza sativa subsp. japonica (Rice).